The chain runs to 897 residues: Valine--tRNA ligase (897 aa).

The 'HIGH' region signature appears at 46-56 (PNVTGSLHMGH). The 'KMSKS' region signature appears at 532–536 (KMSKT). Lysine 535 contacts ATP. The stretch at 839 to 897 (LRRSLEKLDKESGVLAARLDNASYLANAPAELVTESRAKLAEQRAQAAILAEQLARLEN) forms a coiled coil.

It belongs to the class-I aminoacyl-tRNA synthetase family. ValS type 1 subfamily. Monomer.

The protein resides in the cytoplasm. The enzyme catalyses tRNA(Val) + L-valine + ATP = L-valyl-tRNA(Val) + AMP + diphosphate. Functionally, catalyzes the attachment of valine to tRNA(Val). As ValRS can inadvertently accommodate and process structurally similar amino acids such as threonine, to avoid such errors, it has a 'posttransfer' editing activity that hydrolyzes mischarged Thr-tRNA(Val) in a tRNA-dependent manner. This is Valine--tRNA ligase from Gloeobacter violaceus (strain ATCC 29082 / PCC 7421).